The chain runs to 283 residues: 4-diphosphocytidyl-2-C-methyl-D-erythritol kinase (283 aa).

The active site involves K10. 95-105 (PVAAGLGGGSS) is an ATP binding site. Residue D137 is part of the active site.

This sequence belongs to the GHMP kinase family. IspE subfamily.

It catalyses the reaction 4-CDP-2-C-methyl-D-erythritol + ATP = 4-CDP-2-C-methyl-D-erythritol 2-phosphate + ADP + H(+). Its pathway is isoprenoid biosynthesis; isopentenyl diphosphate biosynthesis via DXP pathway; isopentenyl diphosphate from 1-deoxy-D-xylulose 5-phosphate: step 3/6. Catalyzes the phosphorylation of the position 2 hydroxy group of 4-diphosphocytidyl-2C-methyl-D-erythritol. The protein is 4-diphosphocytidyl-2-C-methyl-D-erythritol kinase of Limosilactobacillus reuteri (strain DSM 20016) (Lactobacillus reuteri).